We begin with the raw amino-acid sequence, 378 residues long: Transmembrane 6 superfamily member 2 (378 aa).

Helical transmembrane passes span 34-54 (LCVV…VYSL), 63-83 (PLYA…VIAL), 110-130 (IFIC…MAGA), 140-160 (LGLY…PGNI), 170-190 (PTFF…MRIF), 219-239 (LTLI…GLVV), 269-289 (MLMY…ALTF), 291-311 (GCSW…QAQF), and 332-352 (TWAT…LLAL). 2 EXPERA domains span residues 61–186 (YDPL…CWAG) and 217–351 (ADLT…HLLA).

This sequence belongs to the TM6SF family.

Its subcellular location is the endoplasmic reticulum membrane. It localises to the endoplasmic reticulum-Golgi intermediate compartment membrane. Regulator of liver fat metabolism influencing triglyceride secretion and hepatic lipid droplet content. May function as sterol isomerase. The sequence is that of Transmembrane 6 superfamily member 2 (Tm6sf2) from Rattus norvegicus (Rat).